Consider the following 1207-residue polypeptide: Systemin receptor SR160 (1207 aa).

A signal peptide spans 1 to 34 (MKAHKTVFNQHPLSLNKLFFVLLLIFFLPPASPA). The short motif at 71–78 (CSFTGVSC) is the Cys pair 1 element. 20 LRR repeats span residues 109–131 (NLES…AKSQ), 135–157 (TLDS…SSFG), 161–181 (NLKS…EMLK), 186–207 (SLQV…PWVS), 213–234 (ELEF…LDFK), 235–257 (NLSY…KDCS), 258–280 (NLQH…LSSC), 282–304 (KLSF…PSES), 305–325 (LQYL…QLAD), 329–350 (TVVE…SLGE), 353–375 (SLEL…TLLK), 378–401 (NIKT…SNLP), 402–423 (KLET…GICK), 428–450 (NLKV…LSNC), 452–474 (QLVS…LGSL), 476–499 (KLKD…MYLQ), 500–523 (ALEN…SNCT), 524–547 (KLNW…GRLS), 548–570 (NLAI…LGNC), and 572–594 (SLIW…LFKQ). N-linked (GlcNAc...) asparagine glycosylation is present at Asn-119. Asn-166 and Asn-196 each carry an N-linked (GlcNAc...) asparagine glycan. Residues Asn-235 and Asn-245 are each glycosylated (N-linked (GlcNAc...) asparagine). Asn-287 is a glycosylation site (N-linked (GlcNAc...) asparagine). N-linked (GlcNAc...) asparagine glycans are attached at residues Asn-339 and Asn-363. N-linked (GlcNAc...) asparagine glycosylation is found at Asn-412 and Asn-449. Asn-521 carries an N-linked (GlcNAc...) asparagine glycan. N-linked (GlcNAc...) asparagine glycans are attached at residues Asn-556, Asn-584, Asn-646, and Asn-662. LRR repeat units follow at residues 664 to 686 (SMIF…LGAM), 688 to 711 (YLSI…GGLK), 712 to 735 (NVAI…TSLT), and 736 to 758 (LLGE…APFD). N-linked (GlcNAc...) asparagine glycans are attached at residues Asn-724, Asn-746, and Asn-767. Positions 771-779 (CGYPLPLPC) match the Cys pair 2 motif. A helical transmembrane segment spans residues 803–823 (SVAMGLLFSLFCIFGLIIVAI). The region spanning 888-1163 (FHNDSLVGSG…IQVMAMFKEI (276 aa)) is the Protein kinase domain. Residues 894–902 (VGSGGFGDV) and Lys-916 contribute to the ATP site. The active-site Proton acceptor is the Asp-1014.

The protein belongs to the protein kinase superfamily. Ser/Thr protein kinase family. Post-translationally, glycosylated.

It localises to the cell membrane. It catalyses the reaction L-seryl-[protein] + ATP = O-phospho-L-seryl-[protein] + ADP + H(+). It carries out the reaction L-threonyl-[protein] + ATP = O-phospho-L-threonyl-[protein] + ADP + H(+). In terms of biological role, receptor with a serine/threonine-protein kinase activity. Involved in the perception of systemin, a peptide hormone responsible for the systemic activation of defense genes in leaves of wounded plants. May also regulate, in response to brassinosteroid binding, a signaling cascade involved in plant development. The sequence is that of Systemin receptor SR160 from Solanum peruvianum (Peruvian tomato).